Here is a 308-residue protein sequence, read N- to C-terminus: Homoserine kinase (308 aa).

Residue 95 to 105 (PQSRGLGSSAA) coordinates ATP.

This sequence belongs to the GHMP kinase family. Homoserine kinase subfamily.

The protein resides in the cytoplasm. It carries out the reaction L-homoserine + ATP = O-phospho-L-homoserine + ADP + H(+). Its pathway is amino-acid biosynthesis; L-threonine biosynthesis; L-threonine from L-aspartate: step 4/5. Its function is as follows. Catalyzes the ATP-dependent phosphorylation of L-homoserine to L-homoserine phosphate. The protein is Homoserine kinase of Corynebacterium jeikeium (strain K411).